Consider the following 296-residue polypeptide: Formamidopyrimidine-DNA glycosylase (296 aa).

Proline 2 (schiff-base intermediate with DNA) is an active-site residue. Glutamate 3 (proton donor) is an active-site residue. Residue lysine 61 is the Proton donor; for beta-elimination activity of the active site. DNA is bound by residues histidine 104, arginine 128, and lysine 174. The FPG-type zinc finger occupies histidine 260–leucine 294. Arginine 284 (proton donor; for delta-elimination activity) is an active-site residue.

The protein belongs to the FPG family. Monomer. Zn(2+) serves as cofactor.

It carries out the reaction Hydrolysis of DNA containing ring-opened 7-methylguanine residues, releasing 2,6-diamino-4-hydroxy-5-(N-methyl)formamidopyrimidine.. It catalyses the reaction 2'-deoxyribonucleotide-(2'-deoxyribose 5'-phosphate)-2'-deoxyribonucleotide-DNA = a 3'-end 2'-deoxyribonucleotide-(2,3-dehydro-2,3-deoxyribose 5'-phosphate)-DNA + a 5'-end 5'-phospho-2'-deoxyribonucleoside-DNA + H(+). Its function is as follows. Involved in base excision repair of DNA damaged by oxidation or by mutagenic agents. Acts as a DNA glycosylase that recognizes and removes damaged bases. Has a preference for oxidized purines, such as 7,8-dihydro-8-oxoguanine (8-oxoG). Has AP (apurinic/apyrimidinic) lyase activity and introduces nicks in the DNA strand. Cleaves the DNA backbone by beta-delta elimination to generate a single-strand break at the site of the removed base with both 3'- and 5'-phosphates. In Corynebacterium diphtheriae (strain ATCC 700971 / NCTC 13129 / Biotype gravis), this protein is Formamidopyrimidine-DNA glycosylase.